Here is a 466-residue protein sequence, read N- to C-terminus: Argininosuccinate lyase (466 aa).

The protein belongs to the lyase 1 family. Argininosuccinate lyase subfamily.

The protein localises to the cytoplasm. It catalyses the reaction 2-(N(omega)-L-arginino)succinate = fumarate + L-arginine. The protein operates within amino-acid biosynthesis; L-arginine biosynthesis; L-arginine from L-ornithine and carbamoyl phosphate: step 3/3. The protein is Argininosuccinate lyase of Clostridium perfringens (strain ATCC 13124 / DSM 756 / JCM 1290 / NCIMB 6125 / NCTC 8237 / Type A).